Consider the following 616-residue polypeptide: Chaperone protein HscA (616 aa).

The protein belongs to the heat shock protein 70 family.

Its function is as follows. Chaperone involved in the maturation of iron-sulfur cluster-containing proteins. Has a low intrinsic ATPase activity which is markedly stimulated by HscB. Involved in the maturation of IscU. The chain is Chaperone protein HscA from Klebsiella pneumoniae (strain 342).